Reading from the N-terminus, the 270-residue chain is Phosphatidylglycerol--prolipoprotein diacylglyceryl transferase (270 aa).

7 helical membrane-spanning segments follow: residues 10 to 30 (VAVA…LVGI), 56 to 76 (LIFW…VLFY), 92 to 112 (WKGG…AWWF), 120 to 140 (FFQL…AGRI), 175 to 195 (SQLY…NLYA), 202 to 222 (MAVS…VEFV), and 237 to 257 (VTMG…LIWL). A 1,2-diacyl-sn-glycero-3-phospho-(1'-sn-glycerol) is bound at residue Arg139.

It belongs to the Lgt family.

The protein resides in the cell inner membrane. The enzyme catalyses L-cysteinyl-[prolipoprotein] + a 1,2-diacyl-sn-glycero-3-phospho-(1'-sn-glycerol) = an S-1,2-diacyl-sn-glyceryl-L-cysteinyl-[prolipoprotein] + sn-glycerol 1-phosphate + H(+). Its pathway is protein modification; lipoprotein biosynthesis (diacylglyceryl transfer). In terms of biological role, catalyzes the transfer of the diacylglyceryl group from phosphatidylglycerol to the sulfhydryl group of the N-terminal cysteine of a prolipoprotein, the first step in the formation of mature lipoproteins. The protein is Phosphatidylglycerol--prolipoprotein diacylglyceryl transferase of Pseudomonas syringae pv. syringae (strain B728a).